Here is a 440-residue protein sequence, read N- to C-terminus: Transposon Ty1-DR1 Gag polyprotein (440 aa).

3 stretches are compositionally biased toward polar residues: residues 1–10 (MESQQLSNYP), 48–60 (TKAN…TPAS), and 127–152 (QSQF…GNTF). 3 disordered regions span residues 1 to 93 (MESQ…MMTQ), 126 to 173 (PQSQ…RPPP), and 352 to 440 (GSRN…PGTY). Low complexity predominate over residues 153–165 (TDSSSADSDMTST). Residues 299-401 (NNGIHINNKV…NSKSKTARAH (103 aa)) form an RNA-binding region. Residues 402–418 (NVSTSNNSPSTDNDSIS) are compositionally biased toward low complexity. At Ser-416 the chain carries Phosphoserine. Over residues 419–428 (KSTTEPIQLN) the composition is skewed to polar residues. Basic and acidic residues predominate over residues 429–440 (NKHDLHLRPGTY).

As to quaternary structure, homotrimer.

The protein localises to the cytoplasm. In terms of biological role, capsid protein (CA) is the structural component of the virus-like particle (VLP), forming the shell that encapsulates the retrotransposons dimeric RNA genome. The particles are assembled from trimer-clustered units and there are holes in the capsid shells that allow for the diffusion of macromolecules. CA also has nucleocapsid-like chaperone activity, promoting primer tRNA(i)-Met annealing to the multipartite primer-binding site (PBS), dimerization of Ty1 RNA and initiation of reverse transcription. The sequence is that of Transposon Ty1-DR1 Gag polyprotein (TY1A-DR1) from Saccharomyces cerevisiae (strain ATCC 204508 / S288c) (Baker's yeast).